The sequence spans 26 residues: Histone H2B.1, sperm (26 aa).

Residues 1 to 26 (MPSQKSPTKRSPTKRSPQKGGKGAKR) form a disordered region. Short sequence motifs (SPKK motif) lie at residues 6–9 (SPTK), 11–14 (SPTK), and 16–19 (SPQK). A compositionally biased stretch (basic residues) spans 7-26 (PTKRSPTKRSPQKGGKGAKR). Phosphoserine is present on residues S11 and S16.

The protein belongs to the histone H2B family. In terms of assembly, the nucleosome is a histone octamer containing two molecules each of H2A, H2B, H3 and H4 assembled in one H3-H4 heterotetramer and two H2A-H2B heterodimers. The octamer wraps approximately 147 bp of DNA. In terms of processing, monoubiquitination gives a specific tag for epigenetic transcriptional activation and is also prerequisite for histone H3 'Lys-4' and 'Lys-79' methylation. Post-translationally, phosphorylated on SPKK motifs 2 and 3; which may regulate DNA binding. Dephosphorylated during maturation of spermatids to mature sperm and rephosphorylated at fertilization.

The protein resides in the nucleus. The protein localises to the chromosome. Its function is as follows. Core component of nucleosome. Nucleosomes wrap and compact DNA into chromatin, limiting DNA accessibility to the cellular machineries which require DNA as a template. Histones thereby play a central role in transcription regulation, DNA repair, DNA replication and chromosomal stability. DNA accessibility is regulated via a complex set of post-translational modifications of histones, also called histone code, and nucleosome remodeling. The protein is Histone H2B.1, sperm of Echinus esculentus (Sea urchin).